A 262-amino-acid chain; its full sequence is Acyl-[acyl-carrier-protein]--UDP-N-acetylglucosamine O-acyltransferase (262 aa).

This sequence belongs to the transferase hexapeptide repeat family. LpxA subfamily. In terms of assembly, homotrimer.

The protein resides in the cytoplasm. It catalyses the reaction a (3R)-hydroxyacyl-[ACP] + UDP-N-acetyl-alpha-D-glucosamine = a UDP-3-O-[(3R)-3-hydroxyacyl]-N-acetyl-alpha-D-glucosamine + holo-[ACP]. It participates in glycolipid biosynthesis; lipid IV(A) biosynthesis; lipid IV(A) from (3R)-3-hydroxytetradecanoyl-[acyl-carrier-protein] and UDP-N-acetyl-alpha-D-glucosamine: step 1/6. Involved in the biosynthesis of lipid A, a phosphorylated glycolipid that anchors the lipopolysaccharide to the outer membrane of the cell. This Burkholderia orbicola (strain MC0-3) protein is Acyl-[acyl-carrier-protein]--UDP-N-acetylglucosamine O-acyltransferase.